The primary structure comprises 713 residues: Cyclomaltodextrin glucanotransferase (713 aa).

The N-terminal stretch at 1–27 is a signal peptide; sequence MKRFMKLTAVWTLWLSLTLGLLSPVHA. Residues 28–165 form an A1 region; the sequence is APDTSVSNKQ…NIKVIIDFAP (138 aa). Residues Asp54, Asn56, Asn59, and Asn60 each contribute to the Ca(2+) site. Cys70 and Cys77 are oxidised to a cystine. Ca(2+) is bound by residues Gly78 and Asp80. Substrate is bound at residue 127–128; sequence YW. Asn166 provides a ligand contact to Ca(2+). Residues 166–229 are b; the sequence is NHTSPASSDD…NLYDLADLNH (64 aa). His167 is a substrate binding site. Ile217 is a binding site for Ca(2+). 220–223 serves as a coordination point for substrate; sequence NLYD. Asp226 is a Ca(2+) binding site. The interval 230–433 is A2; it reads NNSSVDVYLK…LRKSNPAIAY (204 aa). A substrate-binding site is contributed by Arg254. Asp256 (nucleophile) is an active-site residue. 259–260 is a substrate binding site; the sequence is KH. His260 provides a ligand contact to Ca(2+). Catalysis depends on Glu284, which acts as the Proton donor. Residues His354, Asp398, and Arg402 each contribute to the substrate site. Residues 434 to 522 form a c region; it reads GSTHERWINN…GTAVWQYTTD (89 aa). The d stretch occupies residues 523 to 609; it reads ATTPIIGNVG…SNIYDNFEVL (87 aa). Positions 526-607 constitute an IPT/TIG domain; sequence PIIGNVGPMM…AASNIYDNFE (82 aa). Positions 608–713 constitute a CBM20 domain; sequence VLTGDQVTVR…TATVNVNWQP (106 aa). The tract at residues 610 to 713 is e; the sequence is TGDQVTVRFV…TATVNVNWQP (104 aa).

It belongs to the glycosyl hydrolase 13 family. As to quaternary structure, monomer. The cofactor is Ca(2+).

The protein localises to the secreted. It carries out the reaction Cyclizes part of a (1-&gt;4)-alpha-D-glucan chain by formation of a (1-&gt;4)-alpha-D-glucosidic bond.. The polypeptide is Cyclomaltodextrin glucanotransferase (cgt) (Bacillus sp. (strain 1011)).